An 88-amino-acid polypeptide reads, in one-letter code: Cell division topological specificity factor (88 aa).

It belongs to the MinE family.

Functionally, prevents the cell division inhibition by proteins MinC and MinD at internal division sites while permitting inhibition at polar sites. This ensures cell division at the proper site by restricting the formation of a division septum at the midpoint of the long axis of the cell. This Carboxydothermus hydrogenoformans (strain ATCC BAA-161 / DSM 6008 / Z-2901) protein is Cell division topological specificity factor.